Here is an 826-residue protein sequence, read N- to C-terminus: Arsenite oxidase subunit AioA (826 aa).

Residues cysteine 22, cysteine 25, and cysteine 29 each coordinate [3Fe-4S] cluster. The substrate site is built by histidine 196, glutamate 204, arginine 419, and histidine 423.

Belongs to the prokaryotic molybdopterin-containing oxidoreductase family. Heterodimer consisting of a large and a small subunit. [3Fe-4S] cluster is required as a cofactor. Requires Mo-bis(molybdopterin guanine dinucleotide) as cofactor.

It carries out the reaction 2 oxidized [azurin] + arsenite + H2O = 2 reduced [azurin] + arsenate + 3 H(+). Involved in the detoxification of arsenic. Oxidizes As(III)O3(3-) (arsenite) to the somewhat less toxic As(V)O4(3-) (arsenate). This Herminiimonas arsenicoxydans protein is Arsenite oxidase subunit AioA (aioA).